Reading from the N-terminus, the 820-residue chain is ATP-dependent RNA helicase drs1 (820 aa).

Positions 1–278 (MAPPKKRTAP…IESEVDAEEE (278 aa)) are disordered. Positions 83-102 (AASEPEEGSEEEEDAGEDDG) are enriched in acidic residues. The span at 130-145 (DETKDGAKKNGDKQGV) shows a compositional bias: basic and acidic residues. 3 stretches are compositionally biased toward acidic residues: residues 172 to 185 (ESED…DDAS), 232 to 245 (DSED…DAAS), and 260 to 277 (VASD…DAEE). Residues 302–330 (KSFQEFNLSRPILRGLAAVNFTNPTPIQR) carry the Q motif motif. One can recognise a Helicase ATP-binding domain in the interval 333–507 (IPVALLGKDI…RVGLNRPVRL (175 aa)). An ATP-binding site is contributed by 346-353 (AVTGSGKT). Positions 455–458 (DEAD) match the DEAD box motif. The Helicase C-terminal domain maps to 537-714 (YLLHLCKEVY…KIEKQLAQAE (178 aa)). Residues 681 to 729 (AVADRWAQKAKDLEEEINAVLEEEKIEKQLAQAEMQVTRSENMIKHEAE) are a coiled coil. The interval 759-820 (LDSVKSKKEK…KKENKKKGKK (62 aa)) is disordered. Over residues 769–786 (VRLSNKDKKRLDDSRQRN) the composition is skewed to basic and acidic residues. Basic residues predominate over residues 806–820 (KIQKGKKENKKKGKK).

It belongs to the DEAD box helicase family. DDX27/DRS1 subfamily. Associates with pre-ribosomal particles.

It localises to the nucleus. Its subcellular location is the nucleolus. The catalysed reaction is ATP + H2O = ADP + phosphate + H(+). ATP-binding RNA helicase involved in ribosome assembly. The sequence is that of ATP-dependent RNA helicase drs1 (drs1) from Aspergillus oryzae (strain ATCC 42149 / RIB 40) (Yellow koji mold).